We begin with the raw amino-acid sequence, 360 residues long: Melanoma-associated antigen B16 (360 aa).

Positions 1–118 (MSQKNPEYAA…GNSVIPPDQP (118 aa)) are disordered. A compositionally biased stretch (basic and acidic residues) spans 9–19 (AADHDHTREEM). The segment covering 63–98 (CSSSQLLTASNQEDPAYETPSTSRGLQHPYVSSSES) has biased composition (polar residues). An MAGE domain is found at 125-324 (IDGKVNFLVN…TVFPSQYEEA (200 aa)). The segment at 340–360 (AGPSSASGESSSDMGSNVPHI) is disordered. The segment covering 341-360 (GPSSASGESSSDMGSNVPHI) has biased composition (low complexity).

The protein is Melanoma-associated antigen B16 (Mageb16) of Rattus norvegicus (Rat).